The chain runs to 343 residues: Anthranilate phosphoribosyltransferase (343 aa).

5-phospho-alpha-D-ribose 1-diphosphate is bound by residues Gly-78, 81-82 (GD), Thr-86, 88-91 (NIST), 106-114 (KHGNRSVSS), and Ser-118. Anthranilate is bound at residue Gly-78. Ser-90 contributes to the Mg(2+) binding site. Asn-109 is a binding site for anthranilate. An anthranilate-binding site is contributed by Arg-164. Residues Asp-223 and Glu-224 each contribute to the Mg(2+) site.

The protein belongs to the anthranilate phosphoribosyltransferase family. Homodimer. Mg(2+) serves as cofactor.

The enzyme catalyses N-(5-phospho-beta-D-ribosyl)anthranilate + diphosphate = 5-phospho-alpha-D-ribose 1-diphosphate + anthranilate. It participates in amino-acid biosynthesis; L-tryptophan biosynthesis; L-tryptophan from chorismate: step 2/5. Catalyzes the transfer of the phosphoribosyl group of 5-phosphorylribose-1-pyrophosphate (PRPP) to anthranilate to yield N-(5'-phosphoribosyl)-anthranilate (PRA). In Chlamydia caviae (strain ATCC VR-813 / DSM 19441 / 03DC25 / GPIC) (Chlamydophila caviae), this protein is Anthranilate phosphoribosyltransferase.